We begin with the raw amino-acid sequence, 329 residues long: Transmembrane protein I329L (329 aa).

A signal peptide spans 1–31 (MLRVFIFFVFLGSGLAGRIKPQITCKYFISE). N32, N39, N44, N76, N82, and N101 each carry an N-linked (GlcNAc...) asparagine; by host glycan. The Extracellular segment spans residues 32 to 239 (NNTWYKYNVT…NTERYKNCYP (208 aa)). The LRR repeat unit spans residues 112–133 (ELKFLDLRYNNLQFIDYNILRK). N-linked (GlcNAc...) asparagine; by host glycosylation is found at N185 and N219. C195 and C237 are joined by a disulfide. A helical membrane pass occupies residues 240–260 (FVLVSILCSCISFLFLIICLL). Over 261-329 (RSICKKYSCT…EKKASCSRRK (69 aa)) the chain is Cytoplasmic.

It belongs to the asfivirus I329L family. Highly glycosylated.

It is found in the host endoplasmic reticulum membrane. The protein localises to the host Golgi apparatus membrane. Its function is as follows. Viral TLR3 homolog that probably prevents TLR3 dimerization and subsequent induction of IFN. Inhibits dsRNA-stimulated activation of NF-kB and IRF3. This chain is Transmembrane protein I329L, found in Ornithodoros (relapsing fever ticks).